The sequence spans 238 residues: CS1 fimbrial subunit B (238 aa).

The signal sequence occupies residues 1-17; sequence MRKLFLSLLMIPFVAKA.

It localises to the fimbrium. In terms of biological role, might function as a shuttle protein in the transport of fimbria through the periplasmic space or might function as an adhesin. The protein is CS1 fimbrial subunit B (csoB) of Escherichia coli.